Consider the following 934-residue polypeptide: MDFPNLVLSAKNSIQNVDSKDEKQKIIDQLISDIRGQNDGVIPDEVLSEIQQVAEINGLSFNYEKPVKQELLEQPDPTSVLSQEVFQIRTILSKTLFVDVEAEDYSVYIPDETSNLSPVQIDARPIQTYQPKALMYKDTAILPSNRDEVSDQYGADEILFDSHMFNDISQAQIRDFETYVLDKAMQIQSSLPNLDFVSSLDKEVNPFNVHNTLCLNFGQREYYNIIADRTNQSFQQRRQSVQFDNVVVDGVARRARVSLRLHPFDSQLLDIIRFNTIQDQPLADTMAEYQLVAADGFVATPRFRTDRDARLIADVRSRVMARLCELSPYFHRTRILSSMTDFNSLWKVNVFSSSIDNAKDAIYRMAEISFTVADATTSALSSVNIASAQQTLLVLLNMSLFRFEIEPVGSQSNFGAAVSAALMLVVFPTDEASMSNVTFDNLCNLVFNELIAWTVDRPTFVKRTGMTNAFEANVNIGGGNMTRDITAYMRFVLLRRPWAVFQRTYDDQYVADIMVPNIDEANVNDQSYMAINNLFSGLIQAAQRNPNPGRQIAATSFRKLLKSMKDSCCNRIMPLIRLMKYNVERIARIYRFFPYTADLVQRIPAFRDERIRIKVPVSGMLSIALGINKSPDVFDWYNLLRFADVIRTKNFAERQSLESIMVQALIRNDINPARSRKEYIQQNIKPATNVVASITKVPSATFTTILSDRMLNNEIRRTQSYIVVNRIRDAVRAAFEHVPTAEHGIAKGALLLPYPQNFQRSSVYVRKDNILYNAPVGVDRFSLDDLLNGRFYQGMVNRIQNMSPFVIAGPLQVRASNASAIDSVTSAYLTMSSPYDACVKPEDLRHNRIVQPPIVDFFSDSSITRPNTQFEQLMSKTSVFVIDAPKLIVQSDATVYNFDYRDIQLTTSVVDKLEFTSVKTPDVTLFNGMLVFED.

Belongs to the rotavirus VP2 family. Homodecamer; each decamer is made up of two conformers of VP2, called VP2A and VP2B. Interacts with a VP1-VP3 complex. Interacts with the intermediate capsid protein VP6. Interacts with NSP5. Interacts (via N-terminus) with NSP2.

It is found in the virion. Functionally, inner capsid protein that self-assembles to form an icosahedral capsid with a T=2 symmetry, which consists of 120 copies of VP2, with channels at each of its five-fold vertices. This capsid constitutes the innermost concentric layer of the viral mature particle. It encapsidates the polymerase VP1, the capping enzyme VP3 and the genomic dsRNA, thereby defining the core. The innermost VP2 capsid and the intermediate VP6 capsid remain intact following cell entry to protect the dsRNA from degradation and to prevent unfavorable antiviral responses in the host cell during all the replication cycle of the virus. Nascent transcripts are transcribed within the structural confines of this double-layered particle (DLP) and are extruded through the channels formed by VP2 N-termini. VP2 is required for the replicase activity of VP1 polymerase. Probably recruits a copy of a VP1-VP3 complex, potentially along with a segment of plus-strand RNA, as a decamer of VP2 assembles. May activate the autoinhibited VP1/RNA complex to coordinate packaging and genome replication. The chain is Inner capsid protein VP2 from Rotavirus B (isolate RVB/Rat/United States/IDIR/1984/G1P[X]) (RV-B).